A 51-amino-acid polypeptide reads, in one-letter code: Insulin (51 aa).

Cystine bridges form between C8–C37, C20–C50, and C36–C41.

This sequence belongs to the insulin family. As to quaternary structure, heterodimer of a B chain and an A chain linked by two disulfide bonds.

The protein localises to the secreted. In terms of biological role, insulin decreases blood glucose concentration. It increases cell permeability to monosaccharides, amino acids and fatty acids. It accelerates glycolysis, the pentose phosphate cycle, and glycogen synthesis in liver. The protein is Insulin (ins) of Platichthys flesus (European flounder).